A 252-amino-acid polypeptide reads, in one-letter code: 2-succinyl-6-hydroxy-2,4-cyclohexadiene-1-carboxylate synthase (252 aa).

The protein belongs to the AB hydrolase superfamily. MenH family. Monomer.

The catalysed reaction is 5-enolpyruvoyl-6-hydroxy-2-succinyl-cyclohex-3-ene-1-carboxylate = (1R,6R)-6-hydroxy-2-succinyl-cyclohexa-2,4-diene-1-carboxylate + pyruvate. It participates in quinol/quinone metabolism; 1,4-dihydroxy-2-naphthoate biosynthesis; 1,4-dihydroxy-2-naphthoate from chorismate: step 3/7. The protein operates within quinol/quinone metabolism; menaquinone biosynthesis. Catalyzes a proton abstraction reaction that results in 2,5-elimination of pyruvate from 2-succinyl-5-enolpyruvyl-6-hydroxy-3-cyclohexene-1-carboxylate (SEPHCHC) and the formation of 2-succinyl-6-hydroxy-2,4-cyclohexadiene-1-carboxylate (SHCHC). The protein is 2-succinyl-6-hydroxy-2,4-cyclohexadiene-1-carboxylate synthase of Escherichia coli O9:H4 (strain HS).